Here is a 437-residue protein sequence, read N- to C-terminus: Protein farnesyltransferase subunit beta (437 aa).

PFTB repeat units follow at residues 123–164 (ATDV…CIIG), 174–215 (REKL…SLTN), 222–263 (FEGT…VILK), 270–312 (LKSL…PLLH), and 332–374 (QQAL…SIAQ). Residues 248–251 (HGGY) and 291–294 (RCNK) contribute to the (2E,6E)-farnesyl diphosphate site. 2 residues coordinate Zn(2+): aspartate 297 and cysteine 299. 300-303 (YSFW) contacts (2E,6E)-farnesyl diphosphate. Histidine 362 contributes to the Zn(2+) binding site. The residue at position 432 (serine 432) is a Phosphoserine. Phosphothreonine is present on threonine 436.

Belongs to the protein prenyltransferase subunit beta family. Heterodimer of FNTA and FNTB. Requires Zn(2+) as cofactor.

The enzyme catalyses L-cysteinyl-[protein] + (2E,6E)-farnesyl diphosphate = S-(2E,6E)-farnesyl-L-cysteinyl-[protein] + diphosphate. Its function is as follows. Essential subunit of the farnesyltransferase complex. Catalyzes the transfer of a farnesyl moiety from farnesyl diphosphate to a cysteine at the fourth position from the C-terminus of several proteins having the C-terminal sequence Cys-aliphatic-aliphatic-X. In Mus musculus (Mouse), this protein is Protein farnesyltransferase subunit beta (Fntb).